The sequence spans 378 residues: Cytochrome b (378 aa).

4 consecutive transmembrane segments (helical) span residues phenylalanine 34 to methionine 54, tryptophan 78 to valine 99, tryptophan 114 to leucine 134, and phenylalanine 179 to leucine 199. Heme b-binding residues include histidine 84 and histidine 98. Residues histidine 183 and histidine 197 each contribute to the heme b site. Residue histidine 202 coordinates a ubiquinone. 4 helical membrane passes run tyrosine 227–phenylalanine 247, leucine 289–histidine 309, leucine 321–alanine 341, and tyrosine 348–leucine 368.

This sequence belongs to the cytochrome b family. In terms of assembly, the main subunits of complex b-c1 are: cytochrome b, cytochrome c1 and the Rieske protein. The cofactor is heme b.

Its subcellular location is the mitochondrion inner membrane. In terms of biological role, component of the ubiquinol-cytochrome c reductase complex (complex III or cytochrome b-c1 complex) that is part of the mitochondrial respiratory chain. The b-c1 complex mediates electron transfer from ubiquinol to cytochrome c. Contributes to the generation of a proton gradient across the mitochondrial membrane that is then used for ATP synthesis. The polypeptide is Cytochrome b (mt:Cyt-b) (Anopheles gambiae (African malaria mosquito)).